Reading from the N-terminus, the 109-residue chain is Ferredoxin (109 aa).

4Fe-4S ferredoxin-type domains lie at 2–30 (TYVV…YEGE) and 31–60 (FMLV…PESP). [3Fe-4S] cluster-binding residues include C9 and C17. C21, C40, C43, and C46 together coordinate [4Fe-4S] cluster. Position 50 (C50) interacts with [3Fe-4S] cluster.

[4Fe-4S] cluster serves as cofactor. The cofactor is [3Fe-4S] cluster.

Its function is as follows. Ferredoxins are iron-sulfur proteins that transfer electrons in a wide variety of metabolic reactions. This is Ferredoxin (fdxA) from Rickettsia prowazekii (strain Madrid E).